The primary structure comprises 367 residues: NADH-quinone oxidoreductase subunit D (367 aa).

It belongs to the complex I 49 kDa subunit family. In terms of assembly, NDH-1 is composed of 14 different subunits. Subunits NuoB, C, D, E, F, and G constitute the peripheral sector of the complex.

It localises to the cell membrane. The enzyme catalyses a quinone + NADH + 5 H(+)(in) = a quinol + NAD(+) + 4 H(+)(out). Its function is as follows. NDH-1 shuttles electrons from NADH, via FMN and iron-sulfur (Fe-S) centers, to quinones in the respiratory chain. The immediate electron acceptor for the enzyme in this species is believed to be ubiquinone. Couples the redox reaction to proton translocation (for every two electrons transferred, four hydrogen ions are translocated across the cytoplasmic membrane), and thus conserves the redox energy in a proton gradient. This Dehalococcoides mccartyi (strain ATCC BAA-2100 / JCM 16839 / KCTC 5957 / BAV1) protein is NADH-quinone oxidoreductase subunit D.